A 196-amino-acid polypeptide reads, in one-letter code: 7-methyl-GTP pyrophosphatase (196 aa).

D72 (proton acceptor) is an active-site residue.

Belongs to the Maf family. YceF subfamily. It depends on a divalent metal cation as a cofactor.

The protein resides in the cytoplasm. It catalyses the reaction N(7)-methyl-GTP + H2O = N(7)-methyl-GMP + diphosphate + H(+). Its function is as follows. Nucleoside triphosphate pyrophosphatase that hydrolyzes 7-methyl-GTP (m(7)GTP). May have a dual role in cell division arrest and in preventing the incorporation of modified nucleotides into cellular nucleic acids. In Neisseria gonorrhoeae (strain ATCC 700825 / FA 1090), this protein is 7-methyl-GTP pyrophosphatase.